Consider the following 903-residue polypeptide: MSAWTMGAQGLDKRGSFFKLIDTIASEIGELKREMVQTDISRENGLEPSETHSMVRHKDGGYSEDKDGKTCPRDSGYDSLSNRLSILDRLLHTHPIWLQLSLSEEEAAEVLQAQPPGIFLVRKSSKMQKKVLSLRLPCEFGAPLKEFTIKESTYTFSLEGSGISFADLFRLIAFYCISRDVLPFTLKLPYAISTAKTESQLEELAQLGLNFWSSSADNKPLNSPPPHRPLPSAGICPASLRQLCLINGVHSIKTRTPSELECSQTNGALCFINPLFLKVHSQDLSTGPKRPSTRTPNANGTERPRSPPPRPPPPAINSLHTSPGLSRTEPQTSMPETVNHSKHGNVALLGTKPTPIPPPRLKKQASFLEAESSAKTLTARRPSRRSEPEPELELELEMGTAGHAGGAPPRDAPGDCTRAPPPGSESQPPPCHGARQRLSDMSLSTSSSDSLEFDRSMPLYGYEADTTSSLEDYEGESDQETMAPPIKSKKKRNSSFVLPKLVKSQLRKMSGVFSSFMTPEKRMVRRIAELSRDKCTYFGCLVQDYVSFLKENKECHVSSTDMLQTIRQFMTQVKNYLSQSSELDPPIESLIPEDQIDVVLEKAMHKCILKPLKGHVEAMLKDFHTADGSWKQLKENLQLVRQRNPQELGVFAPTPDLMELEKIKLKFMTMQKMYSPEKKVMLLLRVCKLIYTVMENNSGRMYGADDFLPVLTYVIAQCDMLELDTEIEYMMELLDPSLLHGEGGYYLTSAYGALSLIKNFQEEQAARLLSSEARDTLRQWHKRRTTNRTIPSVDDFQNYLRVAFQEVNSGCTGKTLLVRPYITTEDVCQLCAEKFKVEDPEEYSLFLFVDETWQQLAEDTYPQKIKAELHSRPQPHIFHFVYKRIKSDPYGVIFQNGEDLTPS.

Residues N44–R73 are disordered. The span at R56–R73 shows a compositional bias: basic and acidic residues. The SH2 domain occupies W97–Y190. Disordered regions lie at residues Q282–R455 and E471–K491. Residues S306 to A315 show a composition bias toward pro residues. Positions S318–V338 are enriched in polar residues. The residue at position 366 (S366) is a Phosphoserine. Over residues A419–C431 the composition is skewed to pro residues. Residues S439–S450 are compositionally biased toward low complexity. An interaction with RAB5B region spans residues L506–D775. Residue S510 is modified to Phosphoserine. Position 518 is a phosphothreonine (T518). A VPS9 domain is found at D627–A766. In terms of domain architecture, Ras-associating spans F796–S887.

It belongs to the RIN (Ras interaction/interference) family. In terms of assembly, homotetramer; probably composed of anti-parallel linkage of two parallel dimers. Interacts with Ras. Interacts with RAB5B, with a much higher affinity for GTP-bound activated RAB5B. Does not interact with other members of the Rab family.

The protein localises to the cytoplasm. Functionally, ras effector protein. May function as an upstream activator and/or downstream effector for RAB5B in endocytic pathway. May function as a guanine nucleotide exchange (GEF) of RAB5B, required for activating the RAB5 proteins by exchanging bound GDP for free GTP. In Mus musculus (Mouse), this protein is Ras and Rab interactor 2 (Rin2).